A 198-amino-acid chain; its full sequence is Transcription factor FapR (198 aa).

In terms of domain architecture, MaoC-like spans 102–168 (TRIARGHHLF…GRTVVDVNSY (67 aa)).

This sequence belongs to the FapR family.

In terms of biological role, transcriptional factor involved in regulation of membrane lipid biosynthesis by repressing genes involved in fatty acid and phospholipid metabolism. The sequence is that of Transcription factor FapR from Geobacillus thermodenitrificans (strain NG80-2).